We begin with the raw amino-acid sequence, 392 residues long: Xyloside xylosyltransferase 1 (392 aa).

Over 1-19 the chain is Cytoplasmic; sequence MGLLRGGAACARAMARLGA. Residues 20-42 traverse the membrane as a helical; Signal-anchor for type II membrane protein segment; the sequence is LRSHYCALLLAAALAVCAFYYLG. Residues 43–392 are Lumenal-facing; that stretch reads SGRETFSSAT…GNCNTPIPED (350 aa). UDP-alpha-D-xylose is bound at residue 103–105; it reads MFT. Position 225 (D225) interacts with Mn(2+). Position 226 (L226) interacts with UDP-alpha-D-xylose. Residue D227 participates in Mn(2+) binding. Residues 262–265 form an interaction with target proteins region; it reads HTFW. UDP-alpha-D-xylose-binding residues include S289, L327, and Q330. The a glycoprotein site is built by Q330 and W359. Intrachain disulfides connect C349–C374 and C356–C385. H382 contributes to the Mn(2+) binding site. Residue N384 participates in a glycoprotein binding.

It belongs to the glycosyltransferase 8 family. Homodimer. Dimer formation may be essential for the retention in endoplasmic reticulum. The cofactor is Mg(2+). Mn(2+) serves as cofactor.

It is found in the endoplasmic reticulum membrane. It carries out the reaction 3-O-[alpha-D-xylosyl-(1-&gt;3)-beta-D-glucosyl]-L-seryl-[EGF-like domain protein] + UDP-alpha-D-xylose = 3-O-[alpha-D-xylosyl-(1-&gt;3)-alpha-D-xylosyl-(1-&gt;3)-beta-D-glucosyl]-L-seryl-[EGF-like domain protein] + UDP + H(+). Its function is as follows. Alpha-1,3-xylosyltransferase, which elongates the O-linked xylose-glucose disaccharide attached to EGF-like repeats in the extracellular domain of target proteins by catalyzing the addition of the second xylose. Known targets include Notch proteins and coagulation factors, such as F9. This chain is Xyloside xylosyltransferase 1 (Xxylt1), found in Mus musculus (Mouse).